The following is a 184-amino-acid chain: UPF0301 protein ABSDF3201 (184 aa).

Belongs to the UPF0301 (AlgH) family.

The protein is UPF0301 protein ABSDF3201 of Acinetobacter baumannii (strain SDF).